Here is a 119-residue protein sequence, read N- to C-terminus: Large ribosomal subunit protein bL12 (119 aa).

The protein belongs to the bacterial ribosomal protein bL12 family. As to quaternary structure, homodimer. Part of the ribosomal stalk of the 50S ribosomal subunit. Forms a multimeric L10(L12)X complex, where L10 forms an elongated spine to which 2 to 4 L12 dimers bind in a sequential fashion. Binds GTP-bound translation factors.

Its function is as follows. Forms part of the ribosomal stalk which helps the ribosome interact with GTP-bound translation factors. Is thus essential for accurate translation. The polypeptide is Large ribosomal subunit protein bL12 (Colwellia psychrerythraea (strain 34H / ATCC BAA-681) (Vibrio psychroerythus)).